Reading from the N-terminus, the 2092-residue chain is Nonribosomal peptide synthetase echPS (2092 aa).

An adenylation 1 region spans residues 13-406 (FSQRCCQNPD…GRRDRVTKIR (394 aa)). A Carrier 1 domain is found at 524–600 (SGPLTIGQAI…SLIEKSRHET (77 aa)). Position 561 is an O-(pantetheine 4'-phosphoryl)serine (serine 561). Positions 596–626 (SRHETEDTPDSSAFATRTPEESSMPTQGPVT) are disordered. The span at 605–624 (DSSAFATRTPEESSMPTQGP) shows a compositional bias: polar residues. The interval 624–1017 (PVTPLQKRMV…YTSLLDAFLD (394 aa)) is condensation 1. An adenylation 2 region spans residues 1068–1446 (ASLYPTHVAV…GRKDRQVKVR (379 aa)). Positions 1544–1622 (IKTTHLEKLI…DLVILVAQQQ (79 aa)) constitute a Carrier 2 domain. Serine 1582 bears the O-(pantetheine 4'-phosphoryl)serine mark. The condensation 2 stretch occupies residues 1663–2047 (SQSQSTFNVS…EALLLECFRI (385 aa)).

This sequence belongs to the NRP synthetase family. Requires pantetheine 4'-phosphate as cofactor.

It carries out the reaction L-tryptophan + L-alanine + 2 ATP = cyclo(L-tryptophyl-L-alanyl) + 2 ADP + 2 phosphate + 2 H(+). Its pathway is secondary metabolite biosynthesis. It participates in alkaloid biosynthesis. Nonribosomal peptide synthetase; part of the gene cluster that mediates the biosynthesis of echinulin family alkaloid. The pathway begins with the biosynthesis of the cyclic dipeptide cyclo-L-Trp-L-Ala (cyclo-TA) by the NRPS echPS via condensation of L-alanine and L-tryptophan. The prenyltransferase echPT1 then catalyzes the first prenylation step, a reverse prenylation reaction at C2, to yield preechinulin. Preechinulin is the substrate of the cytochrome P450 monooxygenase echP450 that catalyzes the formation of the double bond between C10 and C11 to produce neoechulin A. The unique prenyltransferase echPT2 functions as a competitive enzyme with echP450 for preechinulin metabolization and uses preechinulin for effective regiospecific prenylations. Preechinulin is prenylated by echPT2 at C5 or C7. C7-prenylation leads to accumulation of tardioxopiperazine B without further modification by echPT2. In contrast, the C5-prenylated tardioxopiperazine A can be prenylated again by echPT2, predominantly at C7 to form echinulin or less frequently at C4 to give variecolorin L. EchPT2 also accepts neoechilunin A to produce varlecolorin G (prenylation at C5) or isoechinulin A (prenylation at C7). EchPT2 further converts isoechinulin A into dehydroechinulin. Moreover, a yet unidentified enzyme can also convert neoechilunin A into neoechilunin B by introducing a double bond between positions C14 and C17 and thus provides a further substrate to echPT2 for C5 and C7 prenylation. This Aspergillus ruber (strain CBS 135680) protein is Nonribosomal peptide synthetase echPS.